The primary structure comprises 171 residues: Protein TIFY 11d (171 aa).

The Tify domain maps to 65 to 100 (PSAGTAPLTIFYDGRMVVVDDVPVEKAAELMRLAGS). The short motif at 117 to 142 (PIARKASLQRFLQKRKHRITTTSEPY) is the Jas element. The Nuclear localization signal motif lies at 119–126 (ARKASLQR).

It belongs to the TIFY/JAZ family. Interacts with BHLH148 and COI1A. Interacts with COI1A, COI1B and COI2 in a coronatine-dependent manner. Coronatine is an analog of jasmonoyl isoleucine (JA-Ile). In terms of processing, ubiquitinated. Increase in jasmonoyl isoleucine (JA-Ile) levels mediates its degradation via COI1A-mediated proteasome pathway.

Its subcellular location is the nucleus. Functionally, repressor of jasmonate (JA) responses. May act on an initial response of JA-regulated gene expression toward drought tolerance as part of a BHLH148-TIFY11D/JAZ12-COI1A complex. The chain is Protein TIFY 11d from Oryza sativa subsp. japonica (Rice).